The primary structure comprises 434 residues: Oxysterol-binding protein homolog 4 (434 aa).

The ALPS motif stretch occupies residues 7-29 (SSSWTSFLKSIASFNGDLSSLSA). An OSBP-related domain (ORD) region spans residues 16–366 (SIASFNGDLS…WQRRWFKDFD (351 aa)). 24–29 (LSSLSA) provides a ligand contact to a 1,2-diacyl-sn-glycero-3-phospho-(1D-myo-inositol 4-phosphate). Gln-96 is a 20-hydroxycholesterol binding site. Gln-96 contributes to the 25-hydroxycholesterol binding site. 2 residues coordinate 7beta-hydroxycholesterol: Gln-96 and Arg-100. Cholesterol is bound at residue Gln-96. Gln-96 is a binding site for ergosterol. A 1,2-diacyl-sn-glycero-3-phospho-(1D-myo-inositol 4-phosphate) contacts are provided by residues 109-112 (KPLN), 143-144 (HH), Lys-336, Glu-340, and Arg-344. Residue Thr-370 is modified to Phosphothreonine. Phosphoserine is present on Ser-389.

This sequence belongs to the OSBP family.

The protein resides in the cytoplasm. Its subcellular location is the golgi apparatus membrane. Lipid transport protein (LTP) involved in non-vesicular transfer of lipids between membranes. Functions in phosphoinositide-coupled directional transport of various lipids by carrying the lipid molecule in a hydrophobic pocket and transferring it between membranes through the cytosol. Involved in maintenance of intracellular sterol distribution and homeostasis. Involved in lipid countertransport between the Golgi complex and membranes of the endoplasmic reticulum. Specifically exchanges sterol with phosphatidylinositol 4-phosphate (PI4P), delivering sterol to the Golgi in exchange for PI4P, which is delivered to the ER-localized PI4P phosphatase SAC1 for degradation. Thus, by maintaining a PI4P gradient at the ER/Golgi interface, SAC1 may drive PS transport. Displays a similar affinity for PI4P and sterols. Binds sterol and PI4P in a mutually exclusive manner. Involved in ergosterol transport from the plasma membrane (PM) to the ER. Mediates sterol transport from the ER to mitochondria. Involved in the negative regulation of Golgi-derived transport vesicle biogenesis. Plays a role in the positive regulation of vesicular transport of ceramide from the ER to the Golgi, negatively regulating COPII-mediated ER export of cargos. The sequence is that of Oxysterol-binding protein homolog 4 from Saccharomyces cerevisiae (strain ATCC 204508 / S288c) (Baker's yeast).